We begin with the raw amino-acid sequence, 214 residues long: ATP phosphoribosyltransferase (214 aa).

The protein belongs to the ATP phosphoribosyltransferase family. Short subfamily. Heteromultimer composed of HisG and HisZ subunits.

Its subcellular location is the cytoplasm. It catalyses the reaction 1-(5-phospho-beta-D-ribosyl)-ATP + diphosphate = 5-phospho-alpha-D-ribose 1-diphosphate + ATP. It functions in the pathway amino-acid biosynthesis; L-histidine biosynthesis; L-histidine from 5-phospho-alpha-D-ribose 1-diphosphate: step 1/9. In terms of biological role, catalyzes the condensation of ATP and 5-phosphoribose 1-diphosphate to form N'-(5'-phosphoribosyl)-ATP (PR-ATP). Has a crucial role in the pathway because the rate of histidine biosynthesis seems to be controlled primarily by regulation of HisG enzymatic activity. This chain is ATP phosphoribosyltransferase, found in Lysinibacillus sphaericus (strain C3-41).